The following is a 473-amino-acid chain: ATP synthase subunit beta (473 aa).

153 to 160 (GGAGVGKT) contributes to the ATP binding site.

The protein belongs to the ATPase alpha/beta chains family. As to quaternary structure, F-type ATPases have 2 components, CF(1) - the catalytic core - and CF(0) - the membrane proton channel. CF(1) has five subunits: alpha(3), beta(3), gamma(1), delta(1), epsilon(1). CF(0) has three main subunits: a(1), b(2) and c(9-12). The alpha and beta chains form an alternating ring which encloses part of the gamma chain. CF(1) is attached to CF(0) by a central stalk formed by the gamma and epsilon chains, while a peripheral stalk is formed by the delta and b chains.

Its subcellular location is the cell inner membrane. The catalysed reaction is ATP + H2O + 4 H(+)(in) = ADP + phosphate + 5 H(+)(out). Functionally, produces ATP from ADP in the presence of a proton gradient across the membrane. The catalytic sites are hosted primarily by the beta subunits. The chain is ATP synthase subunit beta from Rickettsia rickettsii (strain Iowa).